Reading from the N-terminus, the 489-residue chain is Diaminopimelate decarboxylase 2, chloroplastic (489 aa).

A chloroplast-targeting transit peptide spans 1–50 (MAAVTQFLSQPSSIRGTLNQYQLNQTSLSRIPFLSLKSTLKPLKRLSVKA). Ala51 is modified (N-acetylalanine). Lys130 carries the post-translational modification N6-(pyridoxal phosphate)lysine. Pyridoxal 5'-phosphate is bound by residues Gly309 and 345 to 348 (EPGR). Arg348, Arg384, and Tyr388 together coordinate substrate. Cys416 acts as the Proton donor in catalysis. Substrate is bound by residues Glu417 and Tyr445. Tyr445 provides a ligand contact to pyridoxal 5'-phosphate.

Belongs to the Orn/Lys/Arg decarboxylase class-II family. LysA subfamily. As to quaternary structure, homodimer. It depends on pyridoxal 5'-phosphate as a cofactor.

It localises to the plastid. The protein resides in the chloroplast. The enzyme catalyses meso-2,6-diaminopimelate + H(+) = L-lysine + CO2. It participates in amino-acid biosynthesis; L-lysine biosynthesis via DAP pathway; L-lysine from DL-2,6-diaminopimelate: step 1/1. Specifically catalyzes the decarboxylation of meso-diaminopimelate (meso-DAP) to L-lysine. In Arabidopsis thaliana (Mouse-ear cress), this protein is Diaminopimelate decarboxylase 2, chloroplastic (LYSA2).